The chain runs to 105 residues: Large ribosomal subunit protein uL24 (105 aa).

Belongs to the universal ribosomal protein uL24 family. Part of the 50S ribosomal subunit.

In terms of biological role, one of two assembly initiator proteins, it binds directly to the 5'-end of the 23S rRNA, where it nucleates assembly of the 50S subunit. Its function is as follows. One of the proteins that surrounds the polypeptide exit tunnel on the outside of the subunit. In Clostridium novyi (strain NT), this protein is Large ribosomal subunit protein uL24.